The primary structure comprises 411 residues: MKMVLSQRQREELNQAIADYLGSNGYSSALEAFRKEADISGEAERKIVGLLEKKWTSVIRLQKKVMELEAKLSEAEKEVIEGAPSRAKRSPGEWIPRPPEKFSLSGHRASITRVIFHPTYSLMLSASEDAVIKIWDFETGEYERSLKGHTSSVQDIAFDSQGKLLASCSADLSIKLWDFQQSYDCVKTMLGHDHNVSSVAFVPAGDYVLSASRDQTIKMWEVATGYCVKTYSGHREWIRMVRVHMDGNIFASCSIDHSIRIWSINSRDCKAELRAHDHTVECIAWAPDISTTHINEAAGSDNKKGHHQGPFLASGSRDKTIRVWDVGVGLCLFVLTGHDNWVRELTFHPGGKYLVSASDDKTIRVWDLRNKRFMKTLYAHQHFCTSVDFHKKLPYVISGSVDNTVKVWECR.

Residues 9–41 (QREELNQAIADYLGSNGYSSALEAFRKEADISG) form the LisH domain. A coiled-coil region spans residues 56–83 (TSVIRLQKKVMELEAKLSEAEKEVIEGA). WD repeat units follow at residues 106–147 (GHRA…RSLK), 149–187 (HTSS…DCVK), 191–230 (GHDH…CVKT), 233–272 (GHRE…CKAE), 275–334 (AHDH…CLFV), 337–376 (GHDN…FMKT), and 379–411 (AHQH…WECR).

This sequence belongs to the WD repeat LIS1/nudF family.

Its subcellular location is the cytoplasm. The protein localises to the cytoskeleton. It is found in the microtubule organizing center. It localises to the centrosome. Its function is as follows. Positively regulates the activity of the minus-end directed microtubule motor protein dynein. May enhance dynein-mediated microtubule sliding by targeting dynein to the microtubule plus end. Required for several dynein- and microtubule-dependent processes. The polypeptide is Lissencephaly-1 homolog (Glossina morsitans morsitans (Savannah tsetse fly)).